The following is a 323-amino-acid chain: Methenyltetrahydromethanopterin cyclohydrolase (323 aa).

This sequence belongs to the MCH family.

It localises to the cytoplasm. It catalyses the reaction 5,10-methenyl-5,6,7,8-tetrahydromethanopterin + H2O = N(5)-formyl-5,6,7,8-tetrahydromethanopterin + H(+). The protein operates within one-carbon metabolism; methanogenesis from CO(2); 5,10-methenyl-5,6,7,8-tetrahydromethanopterin from CO(2): step 3/3. Its function is as follows. Catalyzes the reversible interconversion of 5-formyl-H(4)MPT to methenyl-H(4)MPT(+). In Methanococcus vannielii (strain ATCC 35089 / DSM 1224 / JCM 13029 / OCM 148 / SB), this protein is Methenyltetrahydromethanopterin cyclohydrolase.